The sequence spans 605 residues: Capsid scaffolding protein (605 aa).

Residues His52, Ser120, and His139 each act as charge relay system in the active site. The tract at residues 326-344 (GEFVLIPTAYYSQLLTGQT) is interaction with pAP. Positions 585-605 (IQGSTADDADMFANQMMVGRC) are interaction with major capsid protein.

This sequence belongs to the herpesviridae capsid scaffolding protein family. In terms of assembly, homomultimer. Interacts with major capsid protein. Exists in a monomer-dimer equilibrium with the dimer being the active species. Post-translationally, capsid scaffolding protein is cleaved by assemblin after formation of the spherical procapsid. As a result, the capsid obtains its mature, icosahedral shape. Cleavages occur at two or more sites: release (R-site) and maturation (M-site).

It is found in the host cytoplasm. It localises to the host nucleus. It carries out the reaction Cleaves -Ala-|-Ser- and -Ala-|-Ala- bonds in the scaffold protein.. Functionally, acts as a scaffold protein by binding major capsid protein in the cytoplasm, inducing the nuclear localization of both proteins. Multimerizes in the nucleus such as major capsid protein forms the icosahedral T=16 capsid. Autocatalytic cleavage releases the assembly protein, and subsequently abolishes interaction with major capsid protein. Cleavages products are evicted from the capsid before or during DNA packaging. Its function is as follows. Protease that plays an essential role in virion assembly within the nucleus. Catalyzes the cleavage of the assembly protein after formation of the spherical procapsid. By that cleavage, the capsid matures and gains its icosahedral shape. The cleavage sites seem to include -Ala-Ser-, -Ala-Ala-, as well as Ala-Thr bonds. Assemblin and cleavages products are evicted from the capsid before or during DNA packaging. In terms of biological role, plays a major role in capsid assembly. Acts as a scaffold protein by binding major capsid protein. Multimerizes in the nucleus such as major capsid protein forms the icosahedral T=16 capsid. Cleaved by assemblin after capsid completion. The cleavages products are evicted from the capsid before or during DNA packaging. The chain is Capsid scaffolding protein (33) from Varicella-zoster virus (strain Dumas) (HHV-3).